We begin with the raw amino-acid sequence, 161 residues long: Allophycocyanin alpha chain (161 aa).

Position 71 is an N4-methylasparagine (Asn-71). Cys-81 contributes to the (2R,3E)-phycocyanobilin binding site.

The protein belongs to the phycobiliprotein family. In terms of assembly, heterodimer of an alpha and a beta chain. Contains one covalently linked phycocyanobilin chromophore.

It is found in the plastid. The protein resides in the chloroplast thylakoid membrane. Light-harvesting photosynthetic bile pigment-protein from the phycobiliprotein complex. Allophycocyanin has a maximum absorption at approximately 650 nanometers. The sequence is that of Allophycocyanin alpha chain (apcA) from Pyropia haitanensis (Red seaweed).